Reading from the N-terminus, the 131-residue chain is Chromatin accessibility complex protein 1 (131 aa).

Ala2 is modified (N-acetylalanine). Residues 100-124 (ASKYLKMLKEEKREEDEENDNDNES) adopt a coiled-coil conformation. Position 102 is an N6-acetyllysine (Lys102). The disordered stretch occupies residues 109 to 131 (EEKREEDEENDNDNESDHDEADS). The segment covering 112-131 (REEDEENDNDNESDHDEADS) has biased composition (acidic residues). Ser124 is subject to Phosphoserine.

In terms of assembly, heterodimer with POLE3; binds to DNA. Component of the CHRAC ISWI chromatin remodeling complex at least composed of SMARCA5/SNF2H, BAZ1A/ACF1, CHRAC1 and POLE3; the complex preferentially binds DNA through the CHRAC1-POLE3 heterodimer and possesses ATP-dependent nucleosome-remodeling activity. Within the complex, the heterodimer with POLE3 interacts with SMARCA5/SNF2H; the interaction is direct and enhances nucleosome sliding activity by the SMARCA5/SNF2H and BAZ1A/ACF1 interaction. Within the complex, the heterodimer with POLE3 interacts with BAZ1A/ACF1; the interactions are direct. Expressed in heart, brain, placenta, lung, liver, skeletal muscle, kidney and pancreas.

It localises to the nucleus. Functionally, forms a complex with DNA polymerase epsilon subunit POLE3 and binds naked DNA, which is then incorporated into chromatin, aided by the nucleosome remodeling activity of ISWI/SNF2H and ACF1. Does not enhance nucleosome sliding activity of the ACF-5 ISWI chromatin remodeling complex. This is Chromatin accessibility complex protein 1 (CHRAC1) from Homo sapiens (Human).